Here is a 480-residue protein sequence, read N- to C-terminus: CASP8 and FADD-like apoptosis regulator (480 aa).

2 consecutive DED domains span residues 1 to 73 (MSAE…RILK) and 92 to 170 (DYRV…KIQK). Residues 1–195 (MSAEVIHQVE…LQAAIQKSFK (195 aa)) form an interaction with CASP8 region. Positions 1-227 (MSAEVIHQVE…GTQQEPVKKS (227 aa)) are interaction with FADD. Residues 1–305 (MSAEVIHQVE…FACMPEHRDY (305 aa)) form an interaction with CASP8 propeptide region. The tract at residues 1–435 (MSAEVIHQVE…CLSQKLRQER (435 aa)) is not proteolytically processed and involved in apoptosis inhibition. The interval 192 to 435 (KSFKDPSNNF…CLSQKLRQER (244 aa)) is interaction with CASP3. The interaction with TRAF1 and TRAF2 stretch occupies residues 192–480 (KSFKDPSNNF…LRKKLIPSYT (289 aa)). Residues 217–480 (LGTQQEPVKK…LRKKLIPSYT (264 aa)) form an interaction with CASP8 subunits p18 and p10 region. Residues 263–358 (ETELLRDTFT…AGKPKIFFIQ (96 aa)) form a caspase region. Residues 370–480 (SSLLEVDGPA…LRKKLIPSYT (111 aa)) are interaction with CASP8.

The protein belongs to the peptidase C14A family. TNFRSF6 stimulation triggers recruitment to the death-inducing signaling complex (DISC) formed by TNFRSF6, FADD and CASP8. A proteolytic fragment (p43) stays associated with the DISC. Interacts with RIPK1. Post-translationally, proteolytically processed by CASP8 generating subunit p43 and p12.

Its function is as follows. Apoptosis regulator protein which may function as a crucial link between cell survival and cell death pathways in mammalian cells. Acts as an inhibitor of TNFRSF6 mediated apoptosis. A proteolytic fragment (p43) is likely retained in the death-inducing signaling complex (DISC) thereby blocking further recruitment and processing of caspase-8 at the complex. Full length and shorter isoforms have been shown either to induce apoptosis or to reduce TNFRSF-triggered apoptosis. Lacks enzymatic (caspase) activity. The protein is CASP8 and FADD-like apoptosis regulator (CFLAR) of Pongo abelii (Sumatran orangutan).